A 329-amino-acid polypeptide reads, in one-letter code: Putative glucose ABC transporter permease protein TsgC13 (329 aa).

7 helical membrane-spanning segments follow: residues 3–23, 32–52, 60–80, 89–109, 139–161, 193–213, and 216–236; these read FAAG…LAGL, GVLN…GFVV, WLGF…HAFL, VISG…FGSG, AFFR…WFFL, LAVI…SLAF, and LWVP…VVFA.

Belongs to the binding-protein-dependent transport system permease family. As to quaternary structure, the complex is composed of two ATP-binding proteins (TsgD13), two transmembrane proteins (TsgB13 and TsgC13) and a solute-binding protein (TsgA13).

Its subcellular location is the cell membrane. In terms of biological role, part of an ABC transporter complex involved in glucose import (Potential). Responsible for the translocation of the substrate across the membrane. The protein is Putative glucose ABC transporter permease protein TsgC13 (tsgC13) of Haloferax volcanii (strain ATCC 29605 / DSM 3757 / JCM 8879 / NBRC 14742 / NCIMB 2012 / VKM B-1768 / DS2) (Halobacterium volcanii).